A 488-amino-acid polypeptide reads, in one-letter code: 3-octaprenyl-4-hydroxybenzoate carboxy-lyase (488 aa).

A Mn(2+)-binding site is contributed by Asn172. Residues 175-177, 189-191, and 194-195 each bind prenylated FMN; these read IYR, RWL, and RG. Glu238 contributes to the Mn(2+) binding site. Asp287 functions as the Proton donor in the catalytic mechanism.

The protein belongs to the UbiD family. As to quaternary structure, homohexamer. The cofactor is prenylated FMN. Mn(2+) serves as cofactor.

It is found in the cell membrane. The enzyme catalyses a 4-hydroxy-3-(all-trans-polyprenyl)benzoate + H(+) = a 2-(all-trans-polyprenyl)phenol + CO2. It participates in cofactor biosynthesis; ubiquinone biosynthesis. Its function is as follows. Catalyzes the decarboxylation of 3-octaprenyl-4-hydroxy benzoate to 2-octaprenylphenol, an intermediate step in ubiquinone biosynthesis. In Pseudomonas putida (strain ATCC 47054 / DSM 6125 / CFBP 8728 / NCIMB 11950 / KT2440), this protein is 3-octaprenyl-4-hydroxybenzoate carboxy-lyase.